A 533-amino-acid polypeptide reads, in one-letter code: Glucosidase 2 subunit beta (533 aa).

An N-terminal signal peptide occupies residues 1-13 (MLLLLLLLPMCWA). Position 23 is a phosphoserine (Ser23). LDL-receptor class A domains follow at residues 36 to 70 (FTCLDGSASIPFDQVNDDYCDCKDGSDEPGTAACP) and 71 to 112 (NGSF…IVCE). Cystine bridges form between Cys38/Cys57 and Cys55/Cys69. A substrate-binding site is contributed by Asp48. Residues Gln49, Asp52, Tyr54, Asp56, Asp62, and Glu63 each contribute to the Ca(2+) site. Asp52 provides a ligand contact to substrate. Asn71 carries N-linked (GlcNAc...) asparagine glycosylation. 3 cysteine pairs are disulfide-bonded: Cys76-Cys98, Cys96-Cys111, and Cys99-Cys115. At Ser88 the chain carries Phosphoserine; by PKC. Ca(2+) is bound by residues Asp93, Val95, Asp97, Asp103, and Glu104. Residue Lys165 is modified to N6-succinyllysine. Ser167 carries the phosphoserine modification. EF-hand domains lie at 208–243 (RERELAASAFQELDDDMDGAVSVAELQTHPELDTDG) and 244–279 (DGALSEGEAQTLLGGDAQMDAAFFYDRVWAAIRDKY). Residues Asp221, Asp223, Asp225, and Glu232 each contribute to the Ca(2+) site. Residues 284-363 (LPTEYPPSPP…SPTEEDRMPP (80 aa)) are disordered. The span at 312-336 (TEEEDEDEEDEETEEDEDEEDEDSQ) shows a compositional bias: acidic residues. Phosphoserine; by PKC occurs at positions 388 and 395. Positions 418–519 (SQCYELTTNE…ELMTPAACPE (102 aa)) constitute an MRH domain. The cysteines at positions 420 and 433 are disulfide-linked. The residue at position 439 (Ser439) is a Phosphoserine; by PKC. Disulfide bonds link Cys476–Cys505 and Cys490–Cys517. The N-linked (GlcNAc...) asparagine glycan is linked to Asn481. The Prevents secretion from ER motif lies at 530–533 (HDEL).

In terms of assembly, heterodimer of a catalytic alpha subunit (GANAB) and a beta subunit (PRKCSH). Binds glycosylated PTPRC. As to expression, ubiquitous. Highly expressed in liver, spleen, lung, duodenum, stomach, adrenal gland, pituitary, testis, corpus luteum, uterus and fetal ovary.

It localises to the endoplasmic reticulum. It functions in the pathway glycan metabolism; N-glycan metabolism. Regulatory subunit of glucosidase II that cleaves sequentially the 2 innermost alpha-1,3-linked glucose residues from the Glc(2)Man(9)GlcNAc(2) oligosaccharide precursor of immature glycoproteins. Required for efficient PKD1/Polycystin-1 biogenesis and trafficking to the plasma membrane of the primary cilia. In Bos taurus (Bovine), this protein is Glucosidase 2 subunit beta (PRKCSH).